The primary structure comprises 118 residues: UPF0145 protein PTO0347 (118 aa).

It belongs to the UPF0145 family.

This Picrophilus torridus (strain ATCC 700027 / DSM 9790 / JCM 10055 / NBRC 100828 / KAW 2/3) protein is UPF0145 protein PTO0347.